The chain runs to 219 residues: Guanylate kinase (219 aa).

The Guanylate kinase-like domain maps to 15–194 (GLMFVLSSPS…AFAEVQSILK (180 aa)). 22–29 (SPSGAGKT) serves as a coordination point for ATP.

The protein belongs to the guanylate kinase family.

The protein localises to the cytoplasm. The enzyme catalyses GMP + ATP = GDP + ADP. Functionally, essential for recycling GMP and indirectly, cGMP. In Nitrobacter hamburgensis (strain DSM 10229 / NCIMB 13809 / X14), this protein is Guanylate kinase.